The sequence spans 232 residues: Phosphate-specific transport system accessory protein PhoU homolog 1 (232 aa).

It belongs to the PhoU family. Homodimer.

It localises to the cytoplasm. In terms of biological role, plays a role in the regulation of phosphate uptake. This is Phosphate-specific transport system accessory protein PhoU homolog 1 (phoU1) from Thermotoga maritima (strain ATCC 43589 / DSM 3109 / JCM 10099 / NBRC 100826 / MSB8).